The chain runs to 297 residues: Large ribosomal subunit protein uL18 (297 aa).

N-acetylglycine is present on Gly2. Residues Lys5 and Lys48 each carry the N6-acetyllysine modification. Ser185 carries the post-translational modification Phosphoserine. The residue at position 220 (Lys220) is an N6-acetyllysine; alternate. Residue Lys220 forms a Glycyl lysine isopeptide (Lys-Gly) (interchain with G-Cter in SUMO1); alternate linkage. Lys220 participates in a covalent cross-link: Glycyl lysine isopeptide (Lys-Gly) (interchain with G-Cter in SUMO2); alternate. Phosphothreonine is present on Thr232. The tract at residues 253–297 is disordered; the sequence is YEKKPKKEVKKKRWNRPKMSLAQKKDRVAQKKASFLRAQERAAES. The segment covering 258–268 has biased composition (basic residues); the sequence is KKEVKKKRWNR. Residue Ser272 is modified to Phosphoserine.

It belongs to the universal ribosomal protein uL18 family. Component of the large ribosomal subunit (LSU). Part of the 5S RNP complex, which is a LSU subcomplex composed of the 5S RNA, RPL5 and RPL11. Component of a hexameric 5S RNP precursor complex, composed of 5S RNA, RRS1, RPF2/BXDC1, RPL5, RPL11 and HEATR3; this complex acts as a precursor for ribosome assembly. Interacts with NVL in an ATP-dependent manner. Interacts with RRP1B. Interacts with IPO5, IPO7 and KPNB1; these interactions may be involved in RPL5 nuclear import for the assembly of ribosomal subunits. Interacts with RRP1B.

The protein localises to the cytoplasm. The protein resides in the nucleus. It is found in the nucleolus. In terms of biological role, component of the ribosome, a large ribonucleoprotein complex responsible for the synthesis of proteins in the cell. The small ribosomal subunit (SSU) binds messenger RNAs (mRNAs) and translates the encoded message by selecting cognate aminoacyl-transfer RNA (tRNA) molecules. The large subunit (LSU) contains the ribosomal catalytic site termed the peptidyl transferase center (PTC), which catalyzes the formation of peptide bonds, thereby polymerizing the amino acids delivered by tRNAs into a polypeptide chain. The nascent polypeptides leave the ribosome through a tunnel in the LSU and interact with protein factors that function in enzymatic processing, targeting, and the membrane insertion of nascent chains at the exit of the ribosomal tunnel. As part of the 5S RNP/5S ribonucleoprotein particle it is an essential component of the LSU, required for its formation and the maturation of rRNAs. It also couples ribosome biogenesis to p53/TP53 activation. As part of the 5S RNP it accumulates in the nucleoplasm and inhibits MDM2, when ribosome biogenesis is perturbed, mediating the stabilization and the activation of TP53. In Macaca fascicularis (Crab-eating macaque), this protein is Large ribosomal subunit protein uL18 (RPL5).